We begin with the raw amino-acid sequence, 663 residues long: uncharacterized protein (663 aa).

The N-terminal stretch at 1-29 is a signal peptide; the sequence is MLDIGVIGRLKFATAFMAMSLLLVPAAEA.

This sequence belongs to the bacterial solute-binding protein 5 family.

It localises to the periplasm. Functionally, possible binding-protein with either a transport or enzymatic activity. This is an uncharacterized protein from Sinorhizobium fredii (strain NBRC 101917 / NGR234).